Here is a 362-residue protein sequence, read N- to C-terminus: MSKKNNLLVAASGTGGHIFPALAVSKEVEDKWNIHWLGVKQRLDSNLIPKKYNLRTLSIKTPRKNIFLFYQYIEILMSTFQIIRILKEKKINLVFTTGGYISAPTIIASKFLRIPVIIHESNLIPGMVTKYFGFLCNYVLLGFKNTNSYLRNCKTIFTGTPLREQFYKSNPLPEWVPKGKGPLLIVMGGSQGAKAINQILNESLEFLLKKQFRIVHIIGESNQQPFYIKNTKNYIQKKFTNEVAALIQNCDLVISRSGAGTINELIEAEKPSILIPYPDSKNNHQEKNAMIIAESGGSVLINQNNISKEVFEETLERIFKIKSKKGVNHYEILDLMKRNMVNNKIKSKNEIKKFINYFLKEF.

UDP-N-acetyl-alpha-D-glucosamine contacts are provided by residues T14 to G16, N122, R163, S190, and Q285.

It belongs to the glycosyltransferase 28 family. MurG subfamily.

It is found in the cell inner membrane. The enzyme catalyses di-trans,octa-cis-undecaprenyl diphospho-N-acetyl-alpha-D-muramoyl-L-alanyl-D-glutamyl-meso-2,6-diaminopimeloyl-D-alanyl-D-alanine + UDP-N-acetyl-alpha-D-glucosamine = di-trans,octa-cis-undecaprenyl diphospho-[N-acetyl-alpha-D-glucosaminyl-(1-&gt;4)]-N-acetyl-alpha-D-muramoyl-L-alanyl-D-glutamyl-meso-2,6-diaminopimeloyl-D-alanyl-D-alanine + UDP + H(+). It functions in the pathway cell wall biogenesis; peptidoglycan biosynthesis. In terms of biological role, cell wall formation. Catalyzes the transfer of a GlcNAc subunit on undecaprenyl-pyrophosphoryl-MurNAc-pentapeptide (lipid intermediate I) to form undecaprenyl-pyrophosphoryl-MurNAc-(pentapeptide)GlcNAc (lipid intermediate II). The polypeptide is UDP-N-acetylglucosamine--N-acetylmuramyl-(pentapeptide) pyrophosphoryl-undecaprenol N-acetylglucosamine transferase (Prochlorococcus marinus (strain MIT 9215)).